Here is a 471-residue protein sequence, read N- to C-terminus: Variant surface glycoprotein ILTAT 1.21 (471 aa).

A signal peptide spans 1-21 (MLRALLPSTTLALILAGGGHA). N-linked (GlcNAc...) asparagine glycosylation is found at Asn64 and Asn405. Positions 406 to 449 (ATADECPETRCEYDSEKNECRPKKGTETTATGPGERTTPADGKA) are disordered. The span at 412 to 431 (PETRCEYDSEKNECRPKKGT) shows a compositional bias: basic and acidic residues. N-linked (GlcNAc...) asparagine glycosylation occurs at Asn450. The GPI-anchor amidated serine moiety is linked to residue Ser454. Positions 455–471 (DSLLIKTSPLWLAFLLF) are cleaved as a propeptide — removed in mature form.

It is found in the cell membrane. VSG forms a coat on the surface of the parasite. The trypanosome evades the immune response of the host by expressing a series of antigenically distinct VSGs from an estimated 1000 VSG genes. This Trypanosoma brucei brucei protein is Variant surface glycoprotein ILTAT 1.21.